The following is a 73-amino-acid chain: Large ribosomal subunit protein bL31c (73 aa).

This sequence belongs to the bacterial ribosomal protein bL31 family. Type A subfamily. Part of the 50S ribosomal subunit.

It is found in the plastid. It localises to the chloroplast. Functionally, binds the 23S rRNA. The protein is Large ribosomal subunit protein bL31c of Palmaria palmata (Dulse).